A 286-amino-acid polypeptide reads, in one-letter code: Protease HtpX (286 aa).

2 helical membrane passes run Ile4–Leu24 and Thr33–Leu53. His139 provides a ligand contact to Zn(2+). The active site involves Glu140. A Zn(2+)-binding site is contributed by His143. A run of 2 helical transmembrane segments spans residues Gly147–Ser167 and Ile186–Ala206. Glu214 contacts Zn(2+).

This sequence belongs to the peptidase M48B family. It depends on Zn(2+) as a cofactor.

The protein localises to the cell inner membrane. In Pasteurella multocida (strain Pm70), this protein is Protease HtpX.